The sequence spans 254 residues: Triosephosphate isomerase (254 aa).

Residue 9–11 (NWK) coordinates substrate. Residue His95 is the Electrophile of the active site. The Proton acceptor role is filled by Glu167. Substrate-binding positions include Gly173, Ser213, and 234–235 (GG).

The protein belongs to the triosephosphate isomerase family. As to quaternary structure, homodimer.

Its subcellular location is the cytoplasm. It carries out the reaction D-glyceraldehyde 3-phosphate = dihydroxyacetone phosphate. The protein operates within carbohydrate biosynthesis; gluconeogenesis. It participates in carbohydrate degradation; glycolysis; D-glyceraldehyde 3-phosphate from glycerone phosphate: step 1/1. Involved in the gluconeogenesis. Catalyzes stereospecifically the conversion of dihydroxyacetone phosphate (DHAP) to D-glyceraldehyde-3-phosphate (G3P). In Roseiflexus castenholzii (strain DSM 13941 / HLO8), this protein is Triosephosphate isomerase.